The primary structure comprises 145 residues: Neuromedin-S (145 aa).

The first 27 residues, 1–27 (MRSEKHLPPLPLLLAICCLGTLHPSSG), serve as a signal peptide directing secretion. 2 propeptides span residues 28–89 (FPQS…HEIY) and 92–117 (FLFQFSRTKDPSLKTGESQIATAEYT). Asn136 bears the Asparagine amide mark. The propeptide occupies 140 to 145 (VSINEH).

Belongs to the NmU family. In terms of tissue distribution, expressed by the skin glands.

It is found in the secreted. In terms of biological role, stimulates uterine smooth muscle contraction. Synthetic peptide NmS-17 induces calcium mobilization in CHO cells transfected with either human FM-3/GPR66 (EC(50)=0.085 nM) or FM-4/TGR-1 (EC(50)=0.231 nM) NmU/NmS receptors. The protein is Neuromedin-S (nms) of Bombina orientalis (Oriental fire-bellied toad).